Consider the following 386-residue polypeptide: S-adenosylmethionine synthase (386 aa).

Residue His-16 participates in ATP binding. Asp-18 provides a ligand contact to Mg(2+). Glu-44 is a binding site for K(+). 2 residues coordinate L-methionine: Glu-57 and Gln-100. The segment at 100–110 (QSPDINQGVDQ) is flexible loop. ATP is bound by residues 164-166 (DGK), 230-231 (RF), Asp-239, 245-246 (RK), Ala-262, and Lys-266. Residue Asp-239 coordinates L-methionine. L-methionine is bound at residue Lys-270.

It belongs to the AdoMet synthase family. In terms of assembly, homotetramer; dimer of dimers. The cofactor is Mg(2+). K(+) is required as a cofactor.

It is found in the cytoplasm. It catalyses the reaction L-methionine + ATP + H2O = S-adenosyl-L-methionine + phosphate + diphosphate. The protein operates within amino-acid biosynthesis; S-adenosyl-L-methionine biosynthesis; S-adenosyl-L-methionine from L-methionine: step 1/1. Functionally, catalyzes the formation of S-adenosylmethionine (AdoMet) from methionine and ATP. The overall synthetic reaction is composed of two sequential steps, AdoMet formation and the subsequent tripolyphosphate hydrolysis which occurs prior to release of AdoMet from the enzyme. This Nitratiruptor sp. (strain SB155-2) protein is S-adenosylmethionine synthase.